The following is a 2372-amino-acid chain: Nonribosomal peptide synthase roqA (2372 aa).

The tract at residues 217 to 610 (EHCRSQPDAE…VGRKDREVKI (394 aa)) is adenylation 1. The tract at residues 723–745 (AASSHSSTREQPSNQRDKEDVEL) is disordered. Positions 725–736 (SSHSSTREQPSN) are enriched in polar residues. A Carrier 1 domain is found at 750–823 (SAKENTLCSV…KIARCTAESK (74 aa)). S784 is subject to O-(pantetheine 4'-phosphoryl)serine. The condensation 1 stretch occupies residues 856–1122 (EDIYPCTPLQ…FATFPFRTQL (267 aa)). Residues 1290–1679 (QPNSEAVCAW…VGRKDTQVKL (390 aa)) form an adenylation 2 region. A Carrier 2 domain is found at 1819–1895 (KPTTEQERFV…LFCKHVILIQ (77 aa)). Position 1856 is an O-(pantetheine 4'-phosphoryl)serine (S1856). A condensation 2 region spans residues 1962 to 2227 (TSNYTSTAIF…FNVLPCRIAI (266 aa)).

Its pathway is alkaloid biosynthesis. Its function is as follows. Dipeptide synthase; part of the gene cluster that mediates the biosynthesis of the mycotoxins roquefortine C and meleagrin. The first stage is catalyzed by the dipeptide synthase roqA which condenses histidine and tryptophan to produce histidyltryptophanyldiketopiperazine (HTD). HTD is then converted to roquefortine C through two possible pathways. In the first pathway, prenyltransferase roqD transforms HTD to the intermediate roquefortine D, which is in turn converted to roquefortine C by the cytochrome P450 monooxygenase roqR. In the second pathway, HTD is first converted to the intermediate dehydrohistidyltryptophanyldi-ketopiperazine (DHTD) by roqR which is then prenylated by roqD to form roquefortine C. Roquefortine C can be further transformed to meleagrin via three more reactions including oxydation to glandicolin A by roqM, which is further reduced to glandicoline B by roqO. Finally, glandicoline B is converted to meleagrin by the glandicoline B O-methyltransferase roqN. More studies identified further branching and additional metabolites produced by the roquefortine/meleagrin cluster, including roquefortine F, roquefortine L, roquefortine M, roquefortine N and neoxaline. In Penicillium rubens (strain ATCC 28089 / DSM 1075 / NRRL 1951 / Wisconsin 54-1255) (Penicillium chrysogenum), this protein is Nonribosomal peptide synthase roqA.